The sequence spans 769 residues: Protein lethal(2)denticleless (769 aa).

WD repeat units follow at residues 99–129 (CHFNAVFDLEWAPGQMRFVSASGDHTARLWE), 143–174 (GHTRSVKSAAFKRTDPAVFATGGRDGAILIWD), 194–249 (GHTG…KVWD), 264–303 (RHKLPYAGSSTFRGFTNLIVDASGTRLYANCMDNTIYCYN), 320–349 (NSTFYIKSCLSPDGKYLLSGSSDERAYIWN), and 362–393 (GHTVEVTCVAWGSSHDCPIVTCSDDARHKIWR). The tract at residues 196–221 (TGGPGTPVSQRKQRTRTPKMAGGTTS) is disordered. Thr201 bears the Phosphothreonine mark. The residue at position 204 (Ser204) is a Phosphoserine. 3 disordered regions span residues 448–467 (RLMDQNERTPGSVEKTTTKR), 476–562 (AGQE…HVYT), and 655–769 (SPRL…VGSD). Position 456 is a phosphothreonine (Thr456). A Phosphoserine modification is found at Ser459. The span at 503–518 (PSSQETACRHIQLQSI) shows a compositional bias: polar residues. At Ser524 the chain carries Phosphoserine. Residues 524-533 (SPSKRQKENS) show a composition bias toward basic and acidic residues. Residues 546–562 (STPSHSPLSENVNHVYT) are compositionally biased toward polar residues. Ser655 carries the post-translational modification Phosphoserine. Residues 657 to 666 (RLQSLRQSEC) are compositionally biased toward polar residues. Residues Ser679, Ser691, and Ser711 each carry the phosphoserine modification. Residues 689 to 704 (AGSSSHSHSQSQPKTP) are compositionally biased toward low complexity. Polar residues predominate over residues 705 to 714 (TSSRRNSETT). Positions 728–743 (PAEETTTTNAAPSSSD) are enriched in low complexity. Over residues 758 to 769 (SMRTPTTAVGSD) the composition is skewed to polar residues.

It belongs to the WD repeat cdt2 family. In terms of assembly, component of the DCX(DTL) E3 ubiquitin ligase complex, at least composed of Cul-4, pic/DDB1, l(2)dtl/CDT2 and Roc1a. As to expression, ubiquitously expressed during embryogenesis with no sign of tissue specificity in expression up to stage 17.

It localises to the cytoplasm. The protein operates within protein modification; protein ubiquitination. Its function is as follows. Substrate-specific adapter of a DCX (DDB1-CUL4-X-box) E3 ubiquitin-protein ligase complex required for cell cycle control. The DCX(DTL) complex, also named CRL4(CDT2) complex, mediates the polyubiquitination and subsequent degradation of E2f during S phase. E2f degradation is necessary to ensure proper development. Substrates require their interaction with PCNA for their polyubiquitination: substrates interact with PCNA via their PIP-box, leading to recruit the DCX(DTL) complex. This Drosophila melanogaster (Fruit fly) protein is Protein lethal(2)denticleless (l(2)dtl).